The primary structure comprises 681 residues: MADSTGLQFTVKVGALPENTFVVAEFALDEALNRPFNLRLELASAQPDIDFGAVLDQPCELLVWYNGELQRRVCGVVSDFAQGDSGFRRTRYQLMVQPALWRLSLRQNSRIFQAQKPDEILSILLQEHGITDYAFALKNEHAKREYCVQYRETGLDFVNRLAAEEGMFYFHEFEVGKHRIVFADDSAALTAGPELFFNLGNRSLEQGPYVRQFHYREAVRPSDVELKDYSFKTPAYGLSHKKVGAELTHQRDTYQHFDFPGRYKEDPSGKAFAQHRLDALRNDAVAGSGKSNSSALQPGQTFSLTEHPNDSLNTDWQIVRIQHTGLQSQALEEEGGSGPTVYHNEFGVVKASTTWRARIGSPEAPHKPMVDGPQIAVVVGPEGEEIYCDEHGRVKLQFPWDRYGSSNDQSSCWVRVSQGWAGGQYGMMAIPRIGHEVIVSFLEGDPDQPIVTGRTYHATNRPPYELPANKTRTVLRTETHQGEGFNELRFEDQAGKEEIYIHGQKDLNVLIENDAAWHIKHDQHTDIDNERVTRIKANDHLTVEGEKRDQIKADYSLTVDASLHQKLGQSLLVEAGSEVHHKAGMKIVMEAGAELTLKVGGSFVKIDPSGVTLSGGSIKMNSGGSPGSGSGWAGQMPIQPGAVEVVAPPPPMDPARQIATLKSAEPVCEICEQLARQEGGG.

The disordered stretch occupies residues 284-309; the sequence is AVAGSGKSNSSALQPGQTFSLTEHPN. Residues 289-309 show a composition bias toward polar residues; the sequence is GKSNSSALQPGQTFSLTEHPN.

It belongs to the VgrG protein family.

In terms of biological role, part of the type VI secretion system specialized secretion system, which delivers several virulence factors in both prokaryotic and eukaryotic cells during infection. Plays an essential role in bacterial mobility and biofilm formation. The protein is Type VI secretion system spike protein VgrG2 of Aeromonas hydrophila.